We begin with the raw amino-acid sequence, 551 residues long: Putative ABC transporter ATP-binding protein BT9727_3105 (551 aa).

ABC transporter domains are found at residues 5–243 (AEIN…FRPF) and 293–525 (LSAE…SINR). ATP-binding positions include 39–46 (GGSGSGKT) and 327–334 (GKNGTGKS).

This sequence belongs to the ABC transporter superfamily.

It localises to the cell membrane. Its function is as follows. Probably part of an ABC transporter complex. Responsible for energy coupling to the transport system. The sequence is that of Putative ABC transporter ATP-binding protein BT9727_3105 from Bacillus thuringiensis subsp. konkukian (strain 97-27).